The following is a 299-amino-acid chain: F-actin-capping protein subunit alpha-3 (299 aa).

A phosphoserine mark is found at S2 and S290.

Belongs to the F-actin-capping protein alpha subunit family. Component of the F-actin capping complex, composed of a heterodimer of an alpha and a beta subunit. Component of the WASH complex, composed of F-actin-capping protein subunit alpha (CAPZA1, CAPZA2 or CAPZA3), F-actin-capping protein subunit beta (CAPZB), WASHC1, WASHC2, WASHC3, WASHC4 and WASHC5. Exclusively expressed in the testis.

The protein resides in the cytoplasm. Its subcellular location is the cytoskeleton. F-actin-capping proteins bind in a Ca(2+)-independent manner to the fast growing ends of actin filaments (barbed end) thereby blocking the exchange of subunits at these ends. Unlike other capping proteins (such as gelsolin and severin), these proteins do not sever actin filaments. May play a role in the morphogenesis of spermatid. This Mus musculus (Mouse) protein is F-actin-capping protein subunit alpha-3 (Capza3).